The chain runs to 368 residues: MITLEVDLGERSYPIHIGSGLLDNAELLRPHVRGQHAVIVTNETVGPLYAARVEQALAALGKTVRTVTLPDGEAFKHWETLNRIFDALLQAGADRKTTLVALGGGVVGDMTGFAAACYMRGVPFIQMPTTLLAQVDSSVGGKTGINHPLGKNMIGAFHQPNAVIADIDTLRTLPPRELAAGMAEVIKHGAIADADYFAWIERNIQALNACDPELMAVAVQRSCEIKAGVVAQDEREGGLRAILNFGHTFGHAIEAGMGYGAWLHGEAVGCGMVMAADLSHRLGFIDIETLARVRTLTQAAMLPVVAPELGADRYIELMKVDKKAEAGSIKFILLKKLGEAFITSVPDADLRATLAHAVLKPPTEAPVA.

NAD(+) contacts are provided by residues 71–76 (DGEAFK), 105–109 (GVVGD), 129–130 (TT), K142, K151, and 169–172 (TLRT). The Zn(2+) site is built by E184, H247, and H264.

Belongs to the sugar phosphate cyclases superfamily. Dehydroquinate synthase family. The cofactor is Co(2+). It depends on Zn(2+) as a cofactor. NAD(+) serves as cofactor.

It localises to the cytoplasm. It carries out the reaction 7-phospho-2-dehydro-3-deoxy-D-arabino-heptonate = 3-dehydroquinate + phosphate. Its pathway is metabolic intermediate biosynthesis; chorismate biosynthesis; chorismate from D-erythrose 4-phosphate and phosphoenolpyruvate: step 2/7. Functionally, catalyzes the conversion of 3-deoxy-D-arabino-heptulosonate 7-phosphate (DAHP) to dehydroquinate (DHQ). This Cupriavidus taiwanensis (strain DSM 17343 / BCRC 17206 / CCUG 44338 / CIP 107171 / LMG 19424 / R1) (Ralstonia taiwanensis (strain LMG 19424)) protein is 3-dehydroquinate synthase.